A 295-amino-acid chain; its full sequence is Biliverdin reductase A (295 aa).

A propeptide spanning residues 1-2 (MS) is cleaved from the precursor. NAD(+) is bound by residues 18–19 (RA), 76–79 (SSSH), and Y97. Residue S154 is modified to Phosphoserine. S167 contributes to the NAD(+) binding site. T173 is subject to Phosphothreonine. Phosphoserine is present on residues S177 and S229. 2 positions are modified to N6-acetyllysine: K247 and K252. Zn(2+) contacts are provided by H279, C280, C291, and H292.

Belongs to the Gfo/Idh/MocA family. Biliverdin reductase subfamily. In terms of assembly, monomer. The cofactor is Zn(2+).

It localises to the cytoplasm. The protein resides in the cytosol. The enzyme catalyses (4Z,15Z)-bilirubin IXalpha + NAD(+) = biliverdin IXalpha + NADH + H(+). The catalysed reaction is (4Z,15Z)-bilirubin IXalpha + NADP(+) = biliverdin IXalpha + NADPH + H(+). The protein operates within porphyrin-containing compound metabolism; protoheme degradation. In terms of biological role, reduces the gamma-methene bridge of the open tetrapyrrole, biliverdin IXalpha, to bilirubin with the concomitant oxidation of a NADH or NADPH cofactor. Does not reduce bilirubin IXbeta. Uses the reactants NADH or NADPH depending on the pH; NADH is used at the acidic pH range (6-6.9) and NADPH at the alkaline range (8.5-8.7). NADPH, however, is the probable reactant in biological systems. The protein is Biliverdin reductase A of Mus musculus (Mouse).